The following is a 119-amino-acid chain: uncharacterized protein (119 aa).

This is an uncharacterized protein from Vaccinia virus (strain Copenhagen) (VACV).